The chain runs to 126 residues: MNRTMLQGKLHRVKVTQADLNYEGSCAIDQDFLDASGILQYEAVDIYNVNNGQRFSTYAIAAERGSKIISVNGAAARCACEGDLLIICSYVQMSDEQAREWQPKVAYFEGDNQMKRVAKAVPVQVA.

The active-site Schiff-base intermediate with substrate; via pyruvic acid is serine 25. Position 25 is a pyruvic acid (Ser) (serine 25). Residue threonine 57 participates in substrate binding. Tyrosine 58 serves as the catalytic Proton donor. 73-75 is a binding site for substrate; the sequence is GAA.

Belongs to the PanD family. In terms of assembly, heterooctamer of four alpha and four beta subunits. The cofactor is pyruvate. Post-translationally, is synthesized initially as an inactive proenzyme, which is activated by self-cleavage at a specific serine bond to produce a beta-subunit with a hydroxyl group at its C-terminus and an alpha-subunit with a pyruvoyl group at its N-terminus.

The protein localises to the cytoplasm. The catalysed reaction is L-aspartate + H(+) = beta-alanine + CO2. It participates in cofactor biosynthesis; (R)-pantothenate biosynthesis; beta-alanine from L-aspartate: step 1/1. In terms of biological role, catalyzes the pyruvoyl-dependent decarboxylation of aspartate to produce beta-alanine. The sequence is that of Aspartate 1-decarboxylase from Erwinia tasmaniensis (strain DSM 17950 / CFBP 7177 / CIP 109463 / NCPPB 4357 / Et1/99).